A 97-amino-acid chain; its full sequence is Aspartyl/glutamyl-tRNA(Asn/Gln) amidotransferase subunit C (97 aa).

The interval serine 59–leucine 78 is disordered. Residues leucine 63 to leucine 78 show a composition bias toward basic and acidic residues.

This sequence belongs to the GatC family. In terms of assembly, heterotrimer of A, B and C subunits.

It carries out the reaction L-glutamyl-tRNA(Gln) + L-glutamine + ATP + H2O = L-glutaminyl-tRNA(Gln) + L-glutamate + ADP + phosphate + H(+). It catalyses the reaction L-aspartyl-tRNA(Asn) + L-glutamine + ATP + H2O = L-asparaginyl-tRNA(Asn) + L-glutamate + ADP + phosphate + 2 H(+). In terms of biological role, allows the formation of correctly charged Asn-tRNA(Asn) or Gln-tRNA(Gln) through the transamidation of misacylated Asp-tRNA(Asn) or Glu-tRNA(Gln) in organisms which lack either or both of asparaginyl-tRNA or glutaminyl-tRNA synthetases. The reaction takes place in the presence of glutamine and ATP through an activated phospho-Asp-tRNA(Asn) or phospho-Glu-tRNA(Gln). The chain is Aspartyl/glutamyl-tRNA(Asn/Gln) amidotransferase subunit C from Metallosphaera sedula (strain ATCC 51363 / DSM 5348 / JCM 9185 / NBRC 15509 / TH2).